The sequence spans 209 residues: Large ribosomal subunit protein uL3c (209 aa).

Positions 132–154 (PMSHGSKNHRLPGSIGAGSTPGR) are disordered.

The protein belongs to the universal ribosomal protein uL3 family. Part of the 50S ribosomal subunit.

It is found in the plastid. It localises to the cyanelle. In terms of biological role, one of the primary rRNA binding proteins, it binds directly near the 3'-end of the 23S rRNA, where it nucleates assembly of the 50S subunit. The polypeptide is Large ribosomal subunit protein uL3c (rpl3) (Cyanophora paradoxa).